Consider the following 261-residue polypeptide: Claudin-18 (261 aa).

Over 1–6 (MSTTTC) the chain is Cytoplasmic. A helical transmembrane segment spans residues 7-27 (QVVAFLLSILGLAGCIAATGM). Residues 28 to 80 (DMWSTQDLYDNPVTSVFQYEGLWRSCVRQSSGFTECRPYFTILGLPAMLQAVR) lie on the Extracellular side of the membrane. Residues 81 to 101 (ALMIVGIVLGAIGLLVSIFAL) form a helical membrane-spanning segment. Over 102-122 (KCIRIGSMEDSAKANMTLTSG) the chain is Cytoplasmic. The helical transmembrane segment at 123 to 143 (IMFIVSGLCAIAGVSVFANML) threads the bilayer. Over 144-174 (VTNFWMSTANMYTGMGGMVQTVQTRYTFGAA) the chain is Extracellular. Residues 175 to 195 (LFVGWVAGGLTLIGGVMMCIA) traverse the membrane as a helical segment. The interval 195-261 (ACRGLAPEET…QSYPSKHDYV (67 aa)) is required for role in regulation of RANKL-induced osteoclast differentiation. The Cytoplasmic portion of the chain corresponds to 196–261 (CRGLAPEETN…QSYPSKHDYV (66 aa)). Position 214 is a phosphoserine (Ser-214). The interval 242-261 (DGGARTEDEVQSYPSKHDYV) is disordered.

Belongs to the claudin family. As to quaternary structure, interacts with TJP2/ZO-2. Interacts with TJP1/ZO-1. Interacts with YAP1 (phosphorylated); the interaction sequesters YAP1 away from the nucleus and thereby restricts transcription of YAP1 target genes. In terms of assembly, interacts with CLDN19. As to expression, expression is restricted to the lung. Expression is restricted to the stomach mucosa where it is predominantly observed in the epithelial cells of the pit region and the base of the gastric glands including exocrine and endocrine cells (at protein level).

The protein resides in the cell junction. It is found in the tight junction. The protein localises to the cell membrane. Its subcellular location is the lateral cell membrane. Its function is as follows. Involved in alveolar fluid homeostasis via regulation of alveolar epithelial tight junction composition and therefore ion transport and solute permeability, potentially via downstream regulation of the actin cytoskeleton organization and beta-2-adrenergic signaling. Required for lung alveolarization and maintenance of the paracellular alveolar epithelial barrier. Acts to maintain epithelial progenitor cell proliferation and organ size, via regulation of YAP1 localization away from the nucleus and thereby restriction of YAP1 target gene transcription. Acts as a negative regulator of RANKL-induced osteoclast differentiation, potentially via relocation of TJP2/ZO-2 away from the nucleus, subsequently involved in bone resorption in response to calcium deficiency. Mediates the osteoprotective effects of estrogen, potentially via acting downstream of estrogen signaling independently of RANKL signaling pathways. Involved in the maintenance of homeostasis of the alveolar microenvironment via regulation of pH and subsequent T-cell activation in the alveolar space, is therefore indirectly involved in limiting C.neoformans infection. Functionally, required for the formation of the gastric paracellular barrier via its role in tight junction formation, thereby involved in the response to gastric acidification. In Homo sapiens (Human), this protein is Claudin-18 (CLDN18).